We begin with the raw amino-acid sequence, 84 residues long: Sulfur carrier protein TusA (84 aa).

Cys-19 (cysteine persulfide intermediate) is an active-site residue.

This sequence belongs to the sulfur carrier protein TusA family. As to quaternary structure, interacts with IscS.

It localises to the cytoplasm. It functions in the pathway tRNA modification. Sulfur carrier protein involved in sulfur trafficking in the cell. Part of a sulfur-relay system required for 2-thiolation during synthesis of 2-thiouridine of the modified wobble base 5-methylaminomethyl-2-thiouridine (mnm(5)s(2)U) in tRNA. Interacts with IscS and stimulates its cysteine desulfurase activity. Accepts an activated sulfur from IscS, which is then transferred to TusD, and thus determines the direction of sulfur flow from IscS to 2-thiouridine formation. Also appears to be involved in sulfur transfer for the biosynthesis of molybdopterin. This is Sulfur carrier protein TusA from Proteus mirabilis (strain HI4320).